The following is a 79-amino-acid chain: uncharacterized protein (79 aa).

This is an uncharacterized protein from Rhizobium leguminosarum.